The following is a 253-amino-acid chain: Tryptophan synthase alpha chain (253 aa).

Catalysis depends on proton acceptor residues E46 and D57.

Belongs to the TrpA family. In terms of assembly, tetramer of two alpha and two beta chains.

The catalysed reaction is (1S,2R)-1-C-(indol-3-yl)glycerol 3-phosphate + L-serine = D-glyceraldehyde 3-phosphate + L-tryptophan + H2O. It functions in the pathway amino-acid biosynthesis; L-tryptophan biosynthesis; L-tryptophan from chorismate: step 5/5. In terms of biological role, the alpha subunit is responsible for the aldol cleavage of indoleglycerol phosphate to indole and glyceraldehyde 3-phosphate. This Dictyoglomus turgidum (strain DSM 6724 / Z-1310) protein is Tryptophan synthase alpha chain.